The sequence spans 51 residues: Ribosome biogenesis protein Nop10 (51 aa).

The protein belongs to the NOP10 family.

Functionally, involved in ribosome biogenesis; more specifically in 18S rRNA pseudouridylation and in cleavage of pre-rRNA. The protein is Ribosome biogenesis protein Nop10 of Nitrosopumilus maritimus (strain SCM1).